The sequence spans 388 residues: Succinate--CoA ligase [ADP-forming] subunit beta (388 aa).

Positions 9–244 constitute an ATP-grasp domain; that stretch reads KQLFAEYGLP…PSQDDAREAH (236 aa). Residues K46, 53-55, E99, T102, and E107 each bind ATP; that span reads GRG. N199 and D213 together coordinate Mg(2+). Substrate contacts are provided by residues N264 and 321–323; that span reads GIV.

This sequence belongs to the succinate/malate CoA ligase beta subunit family. Heterotetramer of two alpha and two beta subunits. Mg(2+) serves as cofactor.

The enzyme catalyses succinate + ATP + CoA = succinyl-CoA + ADP + phosphate. The catalysed reaction is GTP + succinate + CoA = succinyl-CoA + GDP + phosphate. It functions in the pathway carbohydrate metabolism; tricarboxylic acid cycle; succinate from succinyl-CoA (ligase route): step 1/1. Succinyl-CoA synthetase functions in the citric acid cycle (TCA), coupling the hydrolysis of succinyl-CoA to the synthesis of either ATP or GTP and thus represents the only step of substrate-level phosphorylation in the TCA. The beta subunit provides nucleotide specificity of the enzyme and binds the substrate succinate, while the binding sites for coenzyme A and phosphate are found in the alpha subunit. In Pseudomonas aeruginosa (strain LESB58), this protein is Succinate--CoA ligase [ADP-forming] subunit beta.